The sequence spans 489 residues: GDP-fucose protein O-fucosyltransferase 4 (489 aa).

Over 1 to 7 (MAARCTE) the chain is Cytoplasmic. The chain crosses the membrane as a helical; Signal-anchor for type II membrane protein span at residues 8–24 (AVLAALGVLSVCSASSS). Topologically, residues 25 to 489 (GSEASGEAER…EIFMKRNKNL (465 aa)) are lumenal. Asn162 is a glycosylation site (N-linked (GlcNAc...) asparagine). A disulfide bond links Cys385 and Cys388.

It belongs to the glycosyltransferase 10 family. In terms of tissue distribution, widely expressed. Expressed at slightly higher level in heart, kidney and lung.

Its subcellular location is the endoplasmic reticulum membrane. The enzyme catalyses L-threonyl-[protein] + GDP-beta-L-fucose = 3-O-(alpha-L-fucosyl)-L-threonyl-[protein] + GDP + H(+). It catalyses the reaction L-seryl-[protein] + GDP-beta-L-fucose = 3-O-(alpha-L-fucosyl)-L-seryl-[protein] + GDP + H(+). The protein operates within protein modification; protein glycosylation. Its function is as follows. Protein O-fucosyltransferase that specifically catalyzes O-fucosylation of serine or threonine residues in EMI domains of target proteins, such as MMRN1, MMRN2 and EMID1. Attaches fucose through an O-glycosidic linkage. O-fucosylation of EMI domain-containing proteins may be required for facilitating protein folding and secretion. Also shows minor alpha-(1,3)-fucosyltransferase activity toward activity toward biantennary N-glycan acceptors. However, this was tested with a library of synthetic substrates and this activity is unsure in vivo. In Mus musculus (Mouse), this protein is GDP-fucose protein O-fucosyltransferase 4 (Fut11).